The following is a 153-amino-acid chain: 6,7-dimethyl-8-ribityllumazine synthase (153 aa).

5-amino-6-(D-ribitylamino)uracil-binding positions include phenylalanine 22, alanine 56–glutamate 58, and threonine 80–isoleucine 82. Serine 85–threonine 86 contributes to the (2S)-2-hydroxy-3-oxobutyl phosphate binding site. Catalysis depends on histidine 88, which acts as the Proton donor. Position 113 (phenylalanine 113) interacts with 5-amino-6-(D-ribitylamino)uracil. Arginine 127 serves as a coordination point for (2S)-2-hydroxy-3-oxobutyl phosphate.

Belongs to the DMRL synthase family. As to quaternary structure, forms an icosahedral capsid composed of 60 subunits, arranged as a dodecamer of pentamers.

It carries out the reaction (2S)-2-hydroxy-3-oxobutyl phosphate + 5-amino-6-(D-ribitylamino)uracil = 6,7-dimethyl-8-(1-D-ribityl)lumazine + phosphate + 2 H2O + H(+). Its pathway is cofactor biosynthesis; riboflavin biosynthesis; riboflavin from 2-hydroxy-3-oxobutyl phosphate and 5-amino-6-(D-ribitylamino)uracil: step 1/2. Its function is as follows. Catalyzes the formation of 6,7-dimethyl-8-ribityllumazine by condensation of 5-amino-6-(D-ribitylamino)uracil with 3,4-dihydroxy-2-butanone 4-phosphate. This is the penultimate step in the biosynthesis of riboflavin. The polypeptide is 6,7-dimethyl-8-ribityllumazine synthase (Glaesserella parasuis serovar 5 (strain SH0165) (Haemophilus parasuis)).